We begin with the raw amino-acid sequence, 721 residues long: Polyribonucleotide nucleotidyltransferase (721 aa).

Residues Asp495 and Asp501 each contribute to the Mg(2+) site. One can recognise a KH domain in the interval Pro562 to Ile621. One can recognise an S1 motif domain in the interval Gly631–Arg699. The tract at residues Gly702 to Ser721 is disordered. Residues Glu711 to Ser721 are compositionally biased toward pro residues.

This sequence belongs to the polyribonucleotide nucleotidyltransferase family. Requires Mg(2+) as cofactor.

The protein resides in the cytoplasm. It carries out the reaction RNA(n+1) + phosphate = RNA(n) + a ribonucleoside 5'-diphosphate. Its function is as follows. Involved in mRNA degradation. Catalyzes the phosphorolysis of single-stranded polyribonucleotides processively in the 3'- to 5'-direction. The polypeptide is Polyribonucleotide nucleotidyltransferase (Prochlorococcus marinus (strain MIT 9301)).